A 489-amino-acid polypeptide reads, in one-letter code: N-succinylglutamate 5-semialdehyde dehydrogenase (489 aa).

221–226 (GSSGTG) contacts NAD(+). Catalysis depends on residues Glu-244 and Cys-278.

This sequence belongs to the aldehyde dehydrogenase family. AstD subfamily.

It catalyses the reaction N-succinyl-L-glutamate 5-semialdehyde + NAD(+) + H2O = N-succinyl-L-glutamate + NADH + 2 H(+). Its pathway is amino-acid degradation; L-arginine degradation via AST pathway; L-glutamate and succinate from L-arginine: step 4/5. Catalyzes the NAD-dependent reduction of succinylglutamate semialdehyde into succinylglutamate. In Sorangium cellulosum (strain So ce56) (Polyangium cellulosum (strain So ce56)), this protein is N-succinylglutamate 5-semialdehyde dehydrogenase.